The following is a 292-amino-acid chain: Cytidine deaminase (292 aa).

CMP/dCMP-type deaminase domains follow at residues Thr-47 to Lys-167 and Asp-186 to Leu-292. Asn-88–Glu-90 contributes to the substrate binding site. His-101 is a Zn(2+) binding site. Glu-103 functions as the Proton donor in the catalytic mechanism. Zn(2+)-binding residues include Cys-128 and Cys-131.

It belongs to the cytidine and deoxycytidylate deaminase family. As to quaternary structure, homodimer. Zn(2+) serves as cofactor.

It carries out the reaction cytidine + H2O + H(+) = uridine + NH4(+). The catalysed reaction is 2'-deoxycytidine + H2O + H(+) = 2'-deoxyuridine + NH4(+). This enzyme scavenges exogenous and endogenous cytidine and 2'-deoxycytidine for UMP synthesis. This Haemophilus influenzae (strain ATCC 51907 / DSM 11121 / KW20 / Rd) protein is Cytidine deaminase.